The chain runs to 439 residues: Glycosyl hydrolase DigH (439 aa).

The signal sequence occupies residues 1–27 (MDICSRNEKLAIRRPAILVALALLLCS). The N-palmitoyl cysteine moiety is linked to residue Cys-28. Residue Cys-28 is the site of S-diacylglycerol cysteine attachment. Residues 34 to 54 (ESMVTPPAGSKPPATTQQSSQ) form a disordered region.

The protein belongs to the glycosyl hydrolase-like 10 (GHL10) family.

Its subcellular location is the cell outer membrane. Divisome-localized glycosyl hydrolase that cleaves peptide-free (denuded) peptidoglycans. This Escherichia coli O6:H1 (strain CFT073 / ATCC 700928 / UPEC) protein is Glycosyl hydrolase DigH.